Consider the following 275-residue polypeptide: Bis(5'-nucleosyl)-tetraphosphatase, symmetrical (275 aa).

The protein belongs to the Ap4A hydrolase family.

The catalysed reaction is P(1),P(4)-bis(5'-adenosyl) tetraphosphate + H2O = 2 ADP + 2 H(+). Functionally, hydrolyzes diadenosine 5',5'''-P1,P4-tetraphosphate to yield ADP. The sequence is that of Bis(5'-nucleosyl)-tetraphosphatase, symmetrical (apaH) from Haemophilus influenzae (strain ATCC 51907 / DSM 11121 / KW20 / Rd).